Here is a 78-residue protein sequence, read N- to C-terminus: Small ribosomal subunit protein bS18 (78 aa).

It belongs to the bacterial ribosomal protein bS18 family. Part of the 30S ribosomal subunit. Forms a tight heterodimer with protein bS6.

In terms of biological role, binds as a heterodimer with protein bS6 to the central domain of the 16S rRNA, where it helps stabilize the platform of the 30S subunit. This chain is Small ribosomal subunit protein bS18, found in Kocuria rhizophila (strain ATCC 9341 / DSM 348 / NBRC 103217 / DC2201).